The following is a 444-amino-acid chain: Alpha-N-acetylgalactosaminidase (444 aa).

NAD(+) contacts are provided by residues 30-31 (LR), aspartate 52, asparagine 80, 101-104 (WEWH), histidine 107, 121-122 (EV), and asparagine 150. Tyrosine 179 contacts substrate. Residue 208–212 (SEAKW) participates in NAD(+) binding. Residues arginine 213, 225–228 (YPTH), and tyrosine 307 contribute to the substrate site. Position 225 (tyrosine 225) interacts with NAD(+).

The protein belongs to the Gfo/Idh/MocA family. Glycosyl hydrolase 109 subfamily. Requires NAD(+) as cofactor.

It catalyses the reaction Cleavage of non-reducing alpha-(1-&gt;3)-N-acetylgalactosamine residues from human blood group A and AB mucin glycoproteins, Forssman hapten and blood group A lacto series glycolipids.. In terms of biological role, glycosidase that has specific alpha-N-acetylgalactosaminidase activity. This chain is Alpha-N-acetylgalactosaminidase (nagA), found in Elizabethkingia meningoseptica (Chryseobacterium meningosepticum).